The chain runs to 500 residues: Adenylosuccinate synthetase, chloroplastic (500 aa).

Residues 87–93 and 115–117 contribute to the GTP site; these read GDEGKGK and GHT. Asp88 acts as the Proton acceptor in catalysis. The Mg(2+) site is built by Asp88 and Gly115. Residues 88-91, 113-116, Thr205, Arg219, Gln299, Thr314, and Arg378 each bind IMP; these read DEGK and NAGH. Catalysis depends on His116, which acts as the Proton donor. 374–380 provides a ligand contact to substrate; it reads TTTGRPR. Residues Arg380, 406-408, and 489-491 contribute to the GTP site; these read KLD and GIG.

It belongs to the adenylosuccinate synthetase family. As to quaternary structure, homodimer. Mg(2+) serves as cofactor.

It localises to the plastid. It is found in the chloroplast. It catalyses the reaction IMP + L-aspartate + GTP = N(6)-(1,2-dicarboxyethyl)-AMP + GDP + phosphate + 2 H(+). Its pathway is purine metabolism; AMP biosynthesis via de novo pathway; AMP from IMP: step 1/2. Functionally, plays an important role in the de novo pathway and in the salvage pathway of purine nucleotide biosynthesis. Catalyzes the first committed step in the biosynthesis of AMP from IMP. The sequence is that of Adenylosuccinate synthetase, chloroplastic from Solanum bulbocastanum (Wild potato).